An 85-amino-acid polypeptide reads, in one-letter code: Toxin 3FTx-Lei1 (85 aa).

The signal sequence occupies residues 1 to 21 (MKTLLLSLVVVTFVCLDLAHT). 5 disulfide bridges follow: cysteine 24/cysteine 45, cysteine 27/cysteine 32, cysteine 38/cysteine 63, cysteine 67/cysteine 78, and cysteine 79/cysteine 84.

Belongs to the three-finger toxin family. Ancestral subfamily. Expressed by the venom gland.

It localises to the secreted. The polypeptide is Toxin 3FTx-Lei1 (Leioheterodon madagascariensis (Malagasy giant hognose snake)).